Here is a 170-residue protein sequence, read N- to C-terminus: uncharacterized protein (170 aa).

This is an uncharacterized protein from Acidianus bottle-shaped virus (isolate Italy/Pozzuoli) (ABV).